The following is a 260-amino-acid chain: LIM and SH3 domain protein 1 (260 aa).

M1 is modified (N-acetylmethionine). Residues 5 to 56 (CARCCKIVYPTEKVNCLDKFWHKACFHCETCKMTLNMKNYKGYEKKPYCNAH) form the LIM zinc-binding domain. Position 42 is an N6-acetyllysine (K42). Nebulin repeat units follow at residues 61–95 (SFTM…KNKG) and 97–131 (GFSV…KSRM). A Phosphothreonine modification is found at T68. At K75 the chain carries N6-methyllysine. S99 carries the phosphoserine modification. T104 carries the post-translational modification Phosphothreonine. At K112 the chain carries N6-succinyllysine. Residues S118 and S134 each carry the phosphoserine modification. The segment at 123–204 (HEEFEKSRMG…QRSAPGGGGK (82 aa)) is disordered. Over residues 140-155 (ECERRDPQESSYRRPQ) the composition is skewed to basic and acidic residues. Positions 171 to 180 (QQPQQQPAAQ) are enriched in low complexity. The 60-residue stretch at 201–260 (GGGKRYRAVYDYSAADEDEVSFQDGDTIVNVQQIDDGWMYGTVERTGDTGMLPANYVEAI) folds into the SH3 domain.

In terms of assembly, interacts with F-actin. Interacts with ANKRD54. Interacts with KBTBD10. In terms of processing, phosphorylated.

The protein localises to the cytoplasm. It localises to the cell cortex. The protein resides in the cytoskeleton. In terms of biological role, plays an important role in the regulation of dynamic actin-based, cytoskeletal activities. Agonist-dependent changes in LASP1 phosphorylation may also serve to regulate actin-associated ion transport activities, not only in the parietal cell but also in certain other F-actin-rich secretory epithelial cell types. This chain is LIM and SH3 domain protein 1 (LASP1), found in Bos taurus (Bovine).